The chain runs to 292 residues: (S)-phenoxypropionate/alpha-ketoglutarate-dioxygenase (292 aa).

Fe cation is bound by residues His-108 and Asp-110. 2 residues coordinate 2-oxoglutarate: Thr-135 and Trp-247. Position 262 (His-262) interacts with Fe cation. 2-oxoglutarate is bound at residue Arg-273.

It belongs to the TfdA dioxygenase family. In terms of assembly, monomer. It depends on Fe cation as a cofactor. L-ascorbate serves as cofactor.

It catalyses the reaction (S)-2-(4-chloro-2-methylphenoxy)propanoate + 2-oxoglutarate + O2 = 2-methyl-4-chlorophenol + pyruvate + succinate + CO2. It carries out the reaction (S)-(2,4-dichlorophenoxy)propanoate + 2-oxoglutarate + O2 = 2,4-dichlorophenol + pyruvate + succinate + CO2. Its pathway is xenobiotic degradation; 2-(2,4-dichlorophenoxy)propanoate degradation. With respect to regulation, inhibited by divalent cations, most significantly by copper and nickel, and by diethylpyrocarbonate (DEPC). Functionally, involved in the degradation of the phenoxypropionate herbicides. Catalyzes the enantiospecific cleavage of the ether bond in the herbicid S-dichlorprop ((S)-2-(2,4-dichlorophenoxy)propionate)(S-2,4-DP) and S-mecoprop ((S)-2-(4-chloro-2-methylphenoxy)propionate)(S-2,4-MCPP). It can also accept (RS)-2-(4-chlorophenoxy)propionate, (RS)-2-(m-chlorophenoxy)propionate and phenoxyacetate derivatives such as 2,4-dichlorophenoxyacetate (2,4-D), however it can only accept 2-oxoglutarate as oxygen acceptor. This Delftia acidovorans (Pseudomonas acidovorans) protein is (S)-phenoxypropionate/alpha-ketoglutarate-dioxygenase.